Here is a 236-residue protein sequence, read N- to C-terminus: Ubiquinone biosynthesis O-methyltransferase (236 aa).

The S-adenosyl-L-methionine site is built by Arg39, Gly59, Asp80, and Met124.

Belongs to the methyltransferase superfamily. UbiG/COQ3 family.

The catalysed reaction is a 3-demethylubiquinol + S-adenosyl-L-methionine = a ubiquinol + S-adenosyl-L-homocysteine + H(+). It catalyses the reaction a 3-(all-trans-polyprenyl)benzene-1,2-diol + S-adenosyl-L-methionine = a 2-methoxy-6-(all-trans-polyprenyl)phenol + S-adenosyl-L-homocysteine + H(+). It participates in cofactor biosynthesis; ubiquinone biosynthesis. O-methyltransferase that catalyzes the 2 O-methylation steps in the ubiquinone biosynthetic pathway. The sequence is that of Ubiquinone biosynthesis O-methyltransferase from Shewanella sp. (strain ANA-3).